We begin with the raw amino-acid sequence, 105 residues long: uncharacterized protein (105 aa).

This is an uncharacterized protein from Escherichia coli (Bacteriophage T4).